The following is a 3419-amino-acid chain: Genome polyprotein (3419 aa).

A disordered region spans residues methionine 1 to asparagine 25. Residues methionine 1–arginine 104 lie on the Cytoplasmic side of the membrane. The tract at residues leucine 37 to valine 72 is hydrophobic; homodimerization of capsid protein C. Positions glycine 105–alanine 122 are cleaved as a propeptide — ER anchor for capsid protein C, removed in mature form by serine protease NS3. A helical transmembrane segment spans residues glycine 105–isoleucine 125. Residues threonine 126–asparagine 249 lie on the Extracellular side of the membrane. N-linked (GlcNAc...) asparagine; by host glycosylation is present at asparagine 192. A helical membrane pass occupies residues tryptophan 250–glycine 269. At serine 270–glutamine 274 the chain is on the cytoplasmic side. The helical transmembrane segment at lysine 275–serine 290 threads the bilayer. Residues isoleucine 291–serine 741 are Extracellular-facing. Cysteine 293 and cysteine 320 are oxidised to a cystine. Residue lysine 328 forms a Glycyl lysine isopeptide (Lys-Gly) (interchain with G-Cter in ubiquitin) linkage. Disulfide bonds link cysteine 350-cysteine 406, cysteine 350-cysteine 411, cysteine 364-cysteine 395, cysteine 382-cysteine 406, cysteine 382-cysteine 411, cysteine 476-cysteine 577, and cysteine 594-cysteine 625. The tract at residues aspartate 388 to glycine 401 is fusion peptide. Lysine 567 is covalently cross-linked (Glycyl lysine isopeptide (Lys-Gly) (interchain with G-Cter in ubiquitin)). A helical transmembrane segment spans residues leucine 742–leucine 763. Residues asparagine 764–serine 769 are Cytoplasmic-facing. The chain crosses the membrane as a helical span at residues isoleucine 770–alanine 790. At aspartate 791–lysine 1173 the chain is on the lumenal side. Cystine bridges form between cysteine 794/cysteine 805, cysteine 845/cysteine 933, cysteine 969/cysteine 1013, cysteine 1070/cysteine 1119, cysteine 1081/cysteine 1102, and cysteine 1103/cysteine 1106. Asparagine 920 and asparagine 997 each carry an N-linked (GlcNAc...) asparagine; by host glycan. A helical membrane pass occupies residues isoleucine 1174–serine 1194. Topologically, residues aspartate 1195–valine 1216 are cytoplasmic. The chain crosses the membrane as a helical span at residues alanine 1217–phenylalanine 1237. The Lumenal segment spans residues arginine 1238 to aspartate 1266. The chain crosses the membrane as a helical span at residues leucine 1267 to proline 1287. The Cytoplasmic segment spans residues arginine 1288 to asparagine 1291. A helical transmembrane segment spans residues isoleucine 1292–tryptophan 1312. At arginine 1313–methionine 1341 the chain is on the lumenal side. A helical membrane pass occupies residues alanine 1342 to leucine 1362. The Cytoplasmic portion of the chain corresponds to threonine 1363–serine 1369. Residues tryptophan 1370–alanine 1390 traverse the membrane as a helical segment. Residues lysine 1391–aspartate 1393 lie on the Lumenal side of the membrane. A helical membrane pass occupies residues isoleucine 1394–glycine 1414. Topologically, residues lysine 1415–lysine 1468 are cytoplasmic. Residues isoleucine 1421–proline 1460 form an interacts with and activates NS3 protease region. The interval glycine 1425–aspartate 1447 is disordered. The segment at residues valine 1469–tryptophan 1489 is an intramembrane region (helical). Residues tyrosine 1490–threonine 2166 lie on the Lumenal side of the membrane. The Peptidase S7 domain occupies serine 1499 to cysteine 1676. Residues histidine 1549, aspartate 1573, and serine 1633 each act as charge relay system; for serine protease NS3 activity in the active site. Residues proline 1679–glutamate 1835 enclose the Helicase ATP-binding domain. Residues lysine 1683–glutamine 1686 form an important for RNA-binding region. Position 1692 to 1699 (leucine 1692 to threonine 1699) interacts with ATP. Residues aspartate 1783–histidine 1786 carry the DEAH box motif. In terms of domain architecture, Helicase C-terminal spans proline 1830–glutamate 2009. Residue lysine 1887 is modified to N6-acetyllysine; by host. A helical membrane pass occupies residues leucine 2167–leucine 2187. At methionine 2188–lysine 2191 the chain is on the lumenal side. Positions glycine 2192–leucine 2212 form an intramembrane region, helical. Residues serine 2213 to glutamate 2214 are Cytoplasmic-facing. A helical transmembrane segment spans residues isoleucine 2215 to isoleucine 2235. The Lumenal portion of the chain corresponds to proline 2236 to alanine 2250. An intramembrane region (helical) is located at residues isoleucine 2251 to alanine 2265. Topologically, residues asparagine 2266–serine 2303 are lumenal. Positions alanine 2304–threonine 2324 form an intramembrane region, helical. Residues threonine 2325 to glycine 2340 are Lumenal-facing. Residues valine 2341–leucine 2361 traverse the membrane as a helical segment. Over methionine 2362–proline 2371 the chain is Cytoplasmic. The helical transmembrane segment at leucine 2372 to leucine 2392 threads the bilayer. Topologically, residues glutamine 2393 to glutamine 2437 are lumenal. The helical transmembrane segment at valine 2438–glycine 2458 threads the bilayer. At glutamate 2459–leucine 3419 the chain is on the cytoplasmic side. In terms of domain architecture, mRNA cap 0-1 NS5-type MT spans glycine 2517–alanine 2781. Residues lysine 2529, leucine 2532, asparagine 2533, methionine 2535, phenylalanine 2540, and lysine 2544 each contribute to the mRNA site. Residue lysine 2529–methionine 2535 coordinates GTP. Serine 2572 provides a ligand contact to S-adenosyl-L-methionine. A Phosphoserine modification is found at serine 2572. Residue lysine 2577 is the For 2'-O-MTase activity of the active site. An SUMO-interacting motif (SIM) region spans residues valine 2593–leucine 2596. Positions 2602, 2603, 2620, 2621, 2626, 2627, 2647, 2648, 2662, and 2663 each coordinate S-adenosyl-L-methionine. The active-site For 2'-O-MTase activity is the aspartate 2662. Glutamate 2665–glutamate 2671 is a GTP binding site. An mRNA-binding site is contributed by serine 2666. Lysine 2698 serves as the catalytic For 2'-O-MTase activity. 2 residues coordinate mRNA: arginine 2729 and serine 2731. Residue arginine 2729–serine 2731 coordinates GTP. Glutamate 2734 serves as the catalytic For 2'-O-MTase activity. An S-adenosyl-L-methionine-binding site is contributed by tyrosine 2736. The Nuclear localization signal (NLS) signature appears at lysine 2904 to valine 2910. Zn(2+) is bound by residues glutamate 2955, histidine 2959, cysteine 2964, and cysteine 2967. Residues glycine 3045–alanine 3195 enclose the RdRp catalytic domain. Zn(2+) is bound by residues histidine 3230, cysteine 3246, and cysteine 3365.

This sequence in the N-terminal section; belongs to the class I-like SAM-binding methyltransferase superfamily. mRNA cap 0-1 NS5-type methyltransferase family. In terms of assembly, homodimer. Interacts with host SERTAD3; this interaction promotes capsid protein C degradation. Interacts with host CAPRIN1; this interaction is probably linked to the inhibition of stress granules formation by the virus. Interacts with host G3BP1; this interaction is probably linked to the inhibition of stress granules formation by the virus. Forms heterodimers with envelope protein E in the endoplasmic reticulum and Golgi. Interacts with non-structural protein 2A. As to quaternary structure, homodimer; in the endoplasmic reticulum and Golgi. Interacts with host TYRO3, AXL and DC-SIGN proteins. Interacts with non-structural protein 2A. Interacts with host HAVCR1; this interaction likely mediates virus attachment to host cell. Interacts with host NCAM1. Interacts with host HSPA5. Interacts with Aedes aegypti SRPN25, APY and venom allergen-1 salivary proteins; the interactions do not affect Zika virus replication in human endothelial cells and keratinocytes. In terms of assembly, homodimer; Homohexamer when secreted. Interacts with host TBK1. Interacts with host USP8. Interacts with envelope protein E. Interacts with host HSPA5. Interacts with the structural protein prM/E complex, and the NS2B/NS3 protease complex. As to quaternary structure, forms a heterodimer with serine protease NS3. May form homooligomers. Interacts with human SPCS1. Interacts with non-structural protein 2A. In terms of assembly, forms a heterodimer with NS2B. Interacts with NS4B. Interacts with unphosphorylated RNA-directed RNA polymerase NS5; this interaction stimulates RNA-directed RNA polymerase NS5 guanylyltransferase activity. Interacts with non-structural protein 2A. Interacts with host SHFL; this interaction promotes NS3 degradation via a lysosome-dependent pathway. Interacts with host CEP63; this interaction disorganizes the centrosome and inhibits host innate immune response. May interact with host ANKLE2; the interaction may cause defects in brain development, such as microcephaly. May interact with host SRPRA and SEC61G. As to quaternary structure, interacts with serine protease NS3. Interacts with NS1. Interacts with host TBK1. In terms of assembly, homodimer. Interacts with host STAT2; this interaction inhibits the phosphorylation of the latter, and, when all viral proteins are present (polyprotein), targets STAT2 for degradation. Interacts with host TBK1 and IKBKE; these interactions lead to the inhibition of the host RIG-I signaling pathway. Interacts with host KPNA2. Interacts with host PAF1 complex; the interaction may prevent the recruitment of the host PAF1 complex to interferon-responsive genes, and thus reduces the immune response. Interacts with serine protease NS3. Interacts with host ZSWIM8; this interaction allows STAT2 binding to ZSWIM8 and subsequent proteasomal degradation leading to inhibition of interferon signaling. Post-translationally, specific enzymatic cleavages in vivo yield mature proteins. Cleavages in the lumen of endoplasmic reticulum are performed by host signal peptidase, whereas cleavages in the cytoplasmic side are performed by serine protease NS3. Signal cleavage at the 2K-4B site requires a prior NS3 protease-mediated cleavage at the 4A-2K site. Cleaved in post-Golgi vesicles by a host furin, releasing the mature small envelope protein M, and peptide pr. This cleavage is incomplete as up to 30% of viral particles still carry uncleaved prM. In terms of processing, N-glycosylation plays a role in virulence in mammalian and mosquito hosts, but may have no effect on neurovirulence. Post-translationally, ubiquitination by host TRIM7 promotes virus attachment and fusion of the virus and the host endosome membrane. N-glycosylated. The excreted form is glycosylated, which is required for efficient secretion of the protein from infected cells. In terms of processing, acetylated by host KAT5. Acetylation modulates NS3 RNA-binding and unwinding activities and plays an important positive role for viral replication. Post-translationally, phosphorylated on serines residues. This phosphorylation may trigger NS5 nuclear localization. Sumoylated, required for regulating IFN induced interferon stimulated genes/ISGs.

The protein resides in the virion. Its subcellular location is the host nucleus. It is found in the host cytoplasm. The protein localises to the host perinuclear region. It localises to the secreted. The protein resides in the virion membrane. Its subcellular location is the host endoplasmic reticulum membrane. The catalysed reaction is Selective hydrolysis of -Xaa-Xaa-|-Yaa- bonds in which each of the Xaa can be either Arg or Lys and Yaa can be either Ser or Ala.. It catalyses the reaction RNA(n) + a ribonucleoside 5'-triphosphate = RNA(n+1) + diphosphate. The enzyme catalyses a ribonucleoside 5'-triphosphate + H2O = a ribonucleoside 5'-diphosphate + phosphate + H(+). It carries out the reaction ATP + H2O = ADP + phosphate + H(+). The catalysed reaction is a 5'-end (5'-triphosphoguanosine)-ribonucleoside in mRNA + S-adenosyl-L-methionine = a 5'-end (N(7)-methyl 5'-triphosphoguanosine)-ribonucleoside in mRNA + S-adenosyl-L-homocysteine. It catalyses the reaction a 5'-end (N(7)-methyl 5'-triphosphoguanosine)-ribonucleoside in mRNA + S-adenosyl-L-methionine = a 5'-end (N(7)-methyl 5'-triphosphoguanosine)-(2'-O-methyl-ribonucleoside) in mRNA + S-adenosyl-L-homocysteine + H(+). Its function is as follows. Plays a role in virus budding by binding to the host cell membrane and packages the viral RNA into a nucleocapsid that forms the core of the mature virus particle. During virus entry, may induce genome penetration into the host cytoplasm after hemifusion induced by the surface proteins. Can migrate to the cell nucleus where it modulates host functions. Inhibits the integrated stress response (ISR) in the infected cell. Functionally, inhibits RNA silencing by interfering with host Dicer. Prevents premature fusion activity of envelope proteins in trans-Golgi by binding to envelope protein E at pH 6.0. After virion release in extracellular space, gets dissociated from E dimers. In terms of biological role, plays a role in host immune defense modulation and protection of envelope protein E during virion synthesis. PrM-E cleavage is inefficient, many virions are only partially matured and immature prM-E proteins could play a role in immune evasion. Contributes to fetal microcephaly in humans. Acts as a chaperone for envelope protein E during intracellular virion assembly by masking and inactivating envelope protein E fusion peptide. prM is the only viral peptide matured by host furin in the trans-Golgi network probably to avoid catastrophic activation of the viral fusion activity in acidic Golgi compartment prior to virion release. Its function is as follows. May play a role in virus budding. Exerts cytotoxic effects by activating a mitochondrial apoptotic pathway through M ectodomain. May display a viroporin activity. Functionally, binds to host cell surface receptors and mediates fusion between viral and cellular membranes. Efficient virus attachment to cell is, at least in part, mediated by host HAVCR1 in a cell-type specific manner. In addition, host NCAM1 can also be used as entry receptor. Interaction with host HSPA5 plays an important role in the early stages of infection as well. Envelope protein is synthesized in the endoplasmic reticulum and forms a heterodimer with protein prM. The heterodimer plays a role in virion budding in the ER, and the newly formed immature particle is covered with 60 spikes composed of heterodimers between precursor prM and envelope protein E. The virion is transported to the Golgi apparatus where the low pH causes the dissociation of PrM-E heterodimers and formation of E homodimers. PrM-E cleavage is inefficient, many virions are only partially matured and immature prM-E proteins could play a role in immune evasion. Plays a role in the inhibition of host RLR-induced interferon-beta activation by targeting TANK-binding kinase 1/TBK1. In addition, recruits the host deubiquitinase USP8 to cleave 'Lys-11'-linked polyubiquitin chains from caspase-1/CASP1 thus inhibiting its proteasomal degradation. In turn, stabilized CASP1 promotes cleavage of cGAS, which inhibits its ability to recognize mitochondrial DNA release and initiate type I interferon signaling. In terms of biological role, component of the viral RNA replication complex that recruits genomic RNA, the structural protein prM/E complex, and the NS2B/NS3 protease complex to the virion assembly site and orchestrates virus morphogenesis. Antagonizes also the host MDA5-mediated induction of alpha/beta interferon antiviral response. May disrupt adherens junction formation and thereby impair proliferation of radial cells in the host cortex. Its function is as follows. Required cofactor for the serine protease function of NS3. Functionally, displays three enzymatic activities: serine protease, NTPase and RNA helicase. NS3 serine protease, in association with NS2B, performs its autocleavage and cleaves the polyprotein at dibasic sites in the cytoplasm: C-prM, NS2A-NS2B, NS2B-NS3, NS3-NS4A, NS4A-2K and NS4B-NS5. NS3 RNA helicase binds RNA and unwinds dsRNA in the 3' to 5' direction. Leads to translation arrest when expressed ex vivo. Disrupts host centrosome organization in a CEP63-dependent manner to degrade host TBK1 and inhibits innate immune response. Inhibits the integrated stress response (ISR) in the infected cell. Regulates the ATPase activity of the NS3 helicase activity. NS4A allows NS3 helicase to conserve energy during unwinding. Cooperatively with NS4B suppresses the Akt-mTOR pathway and leads to cellular dysregulation. By inhibiting host ANKLE2 functions, may cause defects in brain development, such as microcephaly. Also antagonizes the host MDA5-mediated induction of alpha/beta interferon antiviral response. Inhibits the integrated stress response (ISR) in the infected cell. In terms of biological role, functions as a signal peptide for NS4B and is required for the interferon antagonism activity of the latter. Its function is as follows. Induces the formation of ER-derived membrane vesicles where the viral replication takes place. Also plays a role in the inhibition of host RLR-induced interferon-beta production at TANK-binding kinase 1/TBK1 level. Cooperatively with NS4A suppresses the Akt-mTOR pathway and leads to cellular dysregulation. Functionally, replicates the viral (+) and (-) RNA genome, and performs the capping of genomes in the cytoplasm. Methylates viral RNA cap at guanine N-7 and ribose 2'-O positions. Once sufficient NS5 is expressed, binds to the cap-proximal structure and inhibits further translation of the viral genome. Besides its role in RNA genome replication, also prevents the establishment of a cellular antiviral state by blocking the interferon-alpha/beta (IFN-alpha/beta) signaling pathway. Mechanistically, interferes with host kinases TBK1 and IKKE upstream of interferon regulatory factor 3/IRF3 to inhibit the RIG-I pathway. Also antagonizes type I interferon signaling by targeting STAT2 for degradation by the proteasome thereby preventing activation of JAK-STAT signaling pathway. Mechanistically, acts as a scaffold protein to connect host ZSWIM8/CUL3 ligase complex and STAT2, leading to STAT2 degradation. Within the host nucleus, disrupts host SUMO1 and STAT2 co-localization with PML, resulting in PML degradation. May also reduce immune responses by preventing the recruitment of the host PAF1 complex to interferon-responsive genes. This is Genome polyprotein from Aedes aegypti (Yellowfever mosquito).